We begin with the raw amino-acid sequence, 311 residues long: 33 kDa chaperonin (311 aa).

Cystine bridges form between Cys-240–Cys-242 and Cys-273–Cys-276.

The protein belongs to the HSP33 family. Post-translationally, under oxidizing conditions two disulfide bonds are formed involving the reactive cysteines. Under reducing conditions zinc is bound to the reactive cysteines and the protein is inactive.

It is found in the cytoplasm. Redox regulated molecular chaperone. Protects both thermally unfolding and oxidatively damaged proteins from irreversible aggregation. Plays an important role in the bacterial defense system toward oxidative stress. The sequence is that of 33 kDa chaperonin from Trichodesmium erythraeum (strain IMS101).